We begin with the raw amino-acid sequence, 154 residues long: NADPH-dependent 7-cyano-7-deazaguanine reductase (154 aa).

The Thioimide intermediate role is filled by C54. D61 functions as the Proton donor in the catalytic mechanism. Substrate-binding positions include 76-78 (VES) and 95-96 (HE).

The protein belongs to the GTP cyclohydrolase I family. QueF type 1 subfamily.

The protein localises to the cytoplasm. The catalysed reaction is 7-aminomethyl-7-carbaguanine + 2 NADP(+) = 7-cyano-7-deazaguanine + 2 NADPH + 3 H(+). The protein operates within tRNA modification; tRNA-queuosine biosynthesis. In terms of biological role, catalyzes the NADPH-dependent reduction of 7-cyano-7-deazaguanine (preQ0) to 7-aminomethyl-7-deazaguanine (preQ1). This is NADPH-dependent 7-cyano-7-deazaguanine reductase from Porphyromonas gingivalis (strain ATCC 33277 / DSM 20709 / CIP 103683 / JCM 12257 / NCTC 11834 / 2561).